A 442-amino-acid chain; its full sequence is C4-dicarboxylate transport protein 2 (442 aa).

The next 9 helical transmembrane spans lie at 20-39, 52-74, 89-111, 141-158, 162-179, 200-221, 231-253, 342-364, and 368-387; these read QLYV…GHYY, AFIK…TGIA, AMLY…ANVV, VTGF…GAFA, ILQV…LALV, LVSV…FTIG, LAML…LGAV, ILLL…AGFI, and ATLS…ILGV.

Belongs to the dicarboxylate/amino acid:cation symporter (DAACS) (TC 2.A.23) family.

Its subcellular location is the cell inner membrane. Its function is as follows. Responsible for the transport of dicarboxylates such as succinate, fumarate, and malate from the periplasm across the membrane. This transport system plays an important role in the energy supply of rhizobium-legume symbionts. The polypeptide is C4-dicarboxylate transport protein 2 (dctA2) (Mesorhizobium japonicum (strain LMG 29417 / CECT 9101 / MAFF 303099) (Mesorhizobium loti (strain MAFF 303099))).